The following is a 95-amino-acid chain: Aspartyl/glutamyl-tRNA(Asn/Gln) amidotransferase subunit C (95 aa).

This sequence belongs to the GatC family. Heterotrimer of A, B and C subunits.

It catalyses the reaction L-glutamyl-tRNA(Gln) + L-glutamine + ATP + H2O = L-glutaminyl-tRNA(Gln) + L-glutamate + ADP + phosphate + H(+). The enzyme catalyses L-aspartyl-tRNA(Asn) + L-glutamine + ATP + H2O = L-asparaginyl-tRNA(Asn) + L-glutamate + ADP + phosphate + 2 H(+). In terms of biological role, allows the formation of correctly charged Asn-tRNA(Asn) or Gln-tRNA(Gln) through the transamidation of misacylated Asp-tRNA(Asn) or Glu-tRNA(Gln) in organisms which lack either or both of asparaginyl-tRNA or glutaminyl-tRNA synthetases. The reaction takes place in the presence of glutamine and ATP through an activated phospho-Asp-tRNA(Asn) or phospho-Glu-tRNA(Gln). This chain is Aspartyl/glutamyl-tRNA(Asn/Gln) amidotransferase subunit C, found in Dehalococcoides mccartyi (strain ATCC BAA-2100 / JCM 16839 / KCTC 5957 / BAV1).